Here is a 120-residue protein sequence, read N- to C-terminus: Cell division protein FtsL (120 aa).

The Cytoplasmic portion of the chain corresponds to 1–36 (MTNLAVKYKQQAQEEVQIQTPPQQMAKPKVKAKITR). The chain crosses the membrane as a helical span at residues 37-57 (IEKLLYVAFIGFLLYACVAFI). Residues 58 to 120 (GNKAGLYQVN…INANNVKGLK (63 aa)) lie on the Extracellular side of the membrane.

The protein belongs to the FtsL family.

Its subcellular location is the cell membrane. Its function is as follows. Essential cell division protein. This chain is Cell division protein FtsL, found in Bacillus cereus (strain ATCC 14579 / DSM 31 / CCUG 7414 / JCM 2152 / NBRC 15305 / NCIMB 9373 / NCTC 2599 / NRRL B-3711).